Consider the following 185-residue polypeptide: Prorelaxin (185 aa).

The first 24 residues, 1–24, serve as a signal peptide directing secretion; the sequence is MPRLFLFHLLGVCLLLNQFSRAVA. Cystine bridges form between Cys35–Cys172, Cys47–Cys185, and Cys171–Cys176. Positions 56 to 157 are cleaved as a propeptide — connecting peptide; sequence SLNQEDAPLK…LRSLGLDTHS (102 aa).

This sequence belongs to the insulin family. Heterodimer of a B chain and an A chain linked by two disulfide bonds.

Its subcellular location is the secreted. Functionally, relaxin is an ovarian hormone that acts with estrogen to produce dilatation of the birth canal in many mammals. May be involved in remodeling of connective tissues during pregnancy, promoting growth of pubic ligaments and ripening of the cervix. The chain is Prorelaxin (RLN) from Macaca mulatta (Rhesus macaque).